The following is a 154-amino-acid chain: Putative pre-16S rRNA nuclease (154 aa).

Belongs to the YqgF nuclease family.

It localises to the cytoplasm. Its function is as follows. Could be a nuclease involved in processing of the 5'-end of pre-16S rRNA. In Rickettsia conorii (strain ATCC VR-613 / Malish 7), this protein is Putative pre-16S rRNA nuclease.